A 469-amino-acid polypeptide reads, in one-letter code: tRNA-2-methylthio-N(6)-dimethylallyladenosine synthase (469 aa).

Residues 22-142 (RKVFIKTYGC…LPEALRRAKE (121 aa)) form the MTTase N-terminal domain. [4Fe-4S] cluster contacts are provided by Cys-31, Cys-67, Cys-105, Cys-183, Cys-187, and Cys-190. In terms of domain architecture, Radical SAM core spans 169 to 401 (RARGVTAFLT…QALLLKQQQE (233 aa)). A TRAM domain is found at 404–466 (ESCIGKEIDL…NNSLFAERAE (63 aa)).

Belongs to the methylthiotransferase family. MiaB subfamily. In terms of assembly, monomer. [4Fe-4S] cluster serves as cofactor.

It is found in the cytoplasm. The catalysed reaction is N(6)-dimethylallyladenosine(37) in tRNA + (sulfur carrier)-SH + AH2 + 2 S-adenosyl-L-methionine = 2-methylsulfanyl-N(6)-dimethylallyladenosine(37) in tRNA + (sulfur carrier)-H + 5'-deoxyadenosine + L-methionine + A + S-adenosyl-L-homocysteine + 2 H(+). In terms of biological role, catalyzes the methylthiolation of N6-(dimethylallyl)adenosine (i(6)A), leading to the formation of 2-methylthio-N6-(dimethylallyl)adenosine (ms(2)i(6)A) at position 37 in tRNAs that read codons beginning with uridine. In Rhizobium leguminosarum bv. trifolii (strain WSM2304), this protein is tRNA-2-methylthio-N(6)-dimethylallyladenosine synthase.